A 60-amino-acid chain; its full sequence is Large ribosomal subunit protein uL30 (60 aa).

The protein belongs to the universal ribosomal protein uL30 family. As to quaternary structure, part of the 50S ribosomal subunit.

The protein is Large ribosomal subunit protein uL30 of Leuconostoc mesenteroides subsp. mesenteroides (strain ATCC 8293 / DSM 20343 / BCRC 11652 / CCM 1803 / JCM 6124 / NCDO 523 / NBRC 100496 / NCIMB 8023 / NCTC 12954 / NRRL B-1118 / 37Y).